We begin with the raw amino-acid sequence, 253 residues long: Isopentenyl-diphosphate delta-isomerase IDI1 (253 aa).

K61 serves as a coordination point for substrate. 2 residues coordinate Mg(2+): H65 and H76. One can recognise a Nudix hydrolase domain in the interval 74–224; it reads LLHRAFSVFL…SLVFTPWFKL (151 aa). Residues Q94 and K99 each coordinate substrate. The active site involves C111. Residue S112 coordinates substrate. The short motif at 112–145 is the Nudix box element; sequence SHPLHIPTETGSTLEDSIAGVKRAAQRKLEHELG. 2 residues coordinate Mg(2+): E174 and E176. The active site involves E176.

This sequence belongs to the IPP isomerase type 1 family. Requires Mg(2+) as cofactor.

It carries out the reaction isopentenyl diphosphate = dimethylallyl diphosphate. The protein operates within isoprenoid biosynthesis; dimethylallyl diphosphate biosynthesis; dimethylallyl diphosphate from isopentenyl diphosphate: step 1/1. Its function is as follows. Isopentenyl-diphosphate delta-isomerase; part of the second module of ergosterol biosynthesis pathway that includes the middle steps of the pathway. IDI1 catalyzes the 1,3-allylic rearrangement of isopentenyl (IPP) to its highly electrophilic allylic isomer, dimethylallyl diphosphate (DMAPP). The second module is carried out in the vacuole and involves the formation of farnesyl diphosphate, which is also an important intermediate in the biosynthesis of ubiquinone, dolichol, heme and prenylated proteins. Activity by the mevalonate kinase ERG12 (FG05912) first converts mevalonate into 5-phosphomevalonate. 5-phosphomevalonate is then further converted to 5-diphosphomevalonate by the phosphomevalonate kinase ERG8 (FG09764). The diphosphomevalonate decarboxylase ERG19 (FG10424) then produces isopentenyl diphosphate. The isopentenyl-diphosphate delta-isomerase IDI1 (FG09722) then catalyzes the 1,3-allylic rearrangement of the homoallylic substrate isopentenyl (IPP) to its highly electrophilic allylic isomer, dimethylallyl diphosphate (DMAPP). Finally the farnesyl diphosphate synthase ERG20 (FG06784) catalyzes the sequential condensation of isopentenyl pyrophosphate with dimethylallyl pyrophosphate, and then with the resultant geranylpyrophosphate to the ultimate product farnesyl pyrophosphate. This chain is Isopentenyl-diphosphate delta-isomerase IDI1, found in Gibberella zeae (strain ATCC MYA-4620 / CBS 123657 / FGSC 9075 / NRRL 31084 / PH-1) (Wheat head blight fungus).